The following is a 540-amino-acid chain: Chaperonin GroEL (540 aa).

ATP-binding positions include 30–33, lysine 51, 87–91, glycine 415, 479–481, and aspartate 495; these read TLGP, DGTTT, and NAA.

It belongs to the chaperonin (HSP60) family. Forms a cylinder of 14 subunits composed of two heptameric rings stacked back-to-back. Interacts with the co-chaperonin GroES.

It localises to the cytoplasm. The catalysed reaction is ATP + H2O + a folded polypeptide = ADP + phosphate + an unfolded polypeptide.. In terms of biological role, together with its co-chaperonin GroES, plays an essential role in assisting protein folding. The GroEL-GroES system forms a nano-cage that allows encapsulation of the non-native substrate proteins and provides a physical environment optimized to promote and accelerate protein folding. The chain is Chaperonin GroEL from Pluralibacter gergoviae (Enterobacter gergoviae).